The sequence spans 135 residues: Cytochrome c oxidase subunit 2 (135 aa).

H81, C116, C120, and H124 together coordinate Cu cation.

Belongs to the cytochrome c oxidase subunit 2 family.

It localises to the cell membrane. It catalyses the reaction 4 Fe(II)-[cytochrome c] + O2 + 8 H(+)(in) = 4 Fe(III)-[cytochrome c] + 2 H2O + 4 H(+)(out). Functionally, subunits I and II form the functional core of the enzyme complex. Electrons originating in cytochrome c are transferred via heme a and Cu(A) to the binuclear center formed by heme a3 and Cu(B). The sequence is that of Cytochrome c oxidase subunit 2 (cbaB) from Thermus thermophilus.